We begin with the raw amino-acid sequence, 174 residues long: UPF0316 protein lin1888 (174 aa).

3 consecutive transmembrane segments (helical) span residues 4-24 (GIFI…IYTV), 36-56 (LAAL…SLVL), and 62-82 (IANV…GMKI).

The protein belongs to the UPF0316 family.

The protein resides in the cell membrane. In Listeria innocua serovar 6a (strain ATCC BAA-680 / CLIP 11262), this protein is UPF0316 protein lin1888.